A 1372-amino-acid polypeptide reads, in one-letter code: DNA-directed RNA polymerase subunit beta (1372 aa).

It belongs to the RNA polymerase beta chain family. The RNAP catalytic core consists of 2 alpha, 1 beta, 1 beta' and 1 omega subunit. When a sigma factor is associated with the core the holoenzyme is formed, which can initiate transcription.

The enzyme catalyses RNA(n) + a ribonucleoside 5'-triphosphate = RNA(n+1) + diphosphate. DNA-dependent RNA polymerase catalyzes the transcription of DNA into RNA using the four ribonucleoside triphosphates as substrates. The polypeptide is DNA-directed RNA polymerase subunit beta (Nitratidesulfovibrio vulgaris (strain DP4) (Desulfovibrio vulgaris)).